Consider the following 201-residue polypeptide: Anthranilate synthase component 2 (201 aa).

Residues 3-196 (NILFIDNFDS…IDWALSSTPA (194 aa)) form the Glutamine amidotransferase type-1 domain. Position 57–59 (57–59 (GPG)) interacts with L-glutamine. The Nucleophile; for GATase activity role is filled by Cys84. L-glutamine-binding positions include Gln88 and 134–135 (SL). Residues His170 and Glu172 each act as for GATase activity in the active site.

In terms of assembly, heterotetramer consisting of two non-identical subunits: a beta subunit (TrpG) and a large alpha subunit (TrpE).

It carries out the reaction chorismate + L-glutamine = anthranilate + pyruvate + L-glutamate + H(+). It participates in amino-acid biosynthesis; L-tryptophan biosynthesis; L-tryptophan from chorismate: step 1/5. Its function is as follows. Part of a heterotetrameric complex that catalyzes the two-step biosynthesis of anthranilate, an intermediate in the biosynthesis of L-tryptophan. In the first step, the glutamine-binding beta subunit (TrpG) of anthranilate synthase (AS) provides the glutamine amidotransferase activity which generates ammonia as a substrate that, along with chorismate, is used in the second step, catalyzed by the large alpha subunit of AS (TrpE) to produce anthranilate. In the absence of TrpG, TrpE can synthesize anthranilate directly from chorismate and high concentrations of ammonia. This is Anthranilate synthase component 2 (trpG) from Vibrio cholerae serotype O1 (strain ATCC 39315 / El Tor Inaba N16961).